The chain runs to 321 residues: Lipoyl synthase (321 aa).

Residues Cys-68, Cys-73, Cys-79, Cys-94, Cys-98, Cys-101, and Ser-308 each coordinate [4Fe-4S] cluster. In terms of domain architecture, Radical SAM core spans 80–297 (FNHGTATFMI…KELAESIGFT (218 aa)).

The protein belongs to the radical SAM superfamily. Lipoyl synthase family. [4Fe-4S] cluster is required as a cofactor.

The protein localises to the cytoplasm. The catalysed reaction is [[Fe-S] cluster scaffold protein carrying a second [4Fe-4S](2+) cluster] + N(6)-octanoyl-L-lysyl-[protein] + 2 oxidized [2Fe-2S]-[ferredoxin] + 2 S-adenosyl-L-methionine + 4 H(+) = [[Fe-S] cluster scaffold protein] + N(6)-[(R)-dihydrolipoyl]-L-lysyl-[protein] + 4 Fe(3+) + 2 hydrogen sulfide + 2 5'-deoxyadenosine + 2 L-methionine + 2 reduced [2Fe-2S]-[ferredoxin]. Its pathway is protein modification; protein lipoylation via endogenous pathway; protein N(6)-(lipoyl)lysine from octanoyl-[acyl-carrier-protein]: step 2/2. Functionally, catalyzes the radical-mediated insertion of two sulfur atoms into the C-6 and C-8 positions of the octanoyl moiety bound to the lipoyl domains of lipoate-dependent enzymes, thereby converting the octanoylated domains into lipoylated derivatives. This Shewanella halifaxensis (strain HAW-EB4) protein is Lipoyl synthase.